The chain runs to 903 residues: MDPRYGAQPQQHPHPHRTPSPGQPLQQGYQLDDNPFDDGRYGQYGPSQQHLAMPSGPDQHRLPTPSDHLNLNAAQSVDNLSGYGPPGDYAVNPEAHHDAYYNQPYEPRPQQQPYDQGYDQEYDQPYDDHRPMLQHQPSDAPSEPYQDQPQQGGGIKRWKTVKQVLLYRGNLVLDCPVPPVLLQQNPHGERDEFTHMRYSAATCDPNDFYDHDFTLRQRLFTKPRHTELFIVVTMYNEDDILFARTMTGVFKNIEYMCNRPNSKTWGKDAWKKIVVCVVSDGRSKINPRTKALLAGMGVYQEGIAKQQVNGKDVTAHIYEYTTQTHLQIKNDVVQLVHRRQPVQMLFCLKEKNAKKINSHRWFFTAFGRVLDPNICVLLDAGTRPGGSSIYHLWKAFDLEPMCGGACGEIKAMLGTGGKYLLNPLVAAQNFEYKMSNILDKPLESAFGFISVLPGAFSAYRYVALQNDKNGKGPLEKYFLGETLHGGSDAGLFESNMYLAEDRILCFELVTKRNCHWILQYVKSATGETDVPDTVTELVLQRRRWLNGSFFAAIYAIVHFLDFLRSDHTFLRKFAFFIEFIFNTINMIFAWFAIGNFFLVFKILTTSLGDDTLLGRTGEILGVVFTWLYGVFLITCFVLSLGNRPAGSGRLYTAMCWFWAIIMIYLLFAAIFIAVKAIIADVNDANGFNFADIFKNKVFYMLIISVMSTFGIWLIASLIMLDPWHMATSLVQYMLLTPTFTNVLNVYAFCNTHDVSWGTKGDDKVEKLPSVNTKDGTGKTDLPDEGDLNAQYQRELAVFAQKHVEVKTTPTPSQLQEKQMDYYRGVRTGVVLIWMVSNFGLAALVLSSAGLDRISPNKDKDHEAEQLSRSNIYMSIVLWSVAGLSAFKFIGAMWFLVVRMFRGV.

The segment at 1 to 154 (MDPRYGAQPQ…YQDQPQQGGG (154 aa)) is disordered. The segment covering 67-79 (DHLNLNAAQSVDN) has biased composition (polar residues). Asparagine 79 carries N-linked (GlcNAc...) asparagine glycosylation. A compositionally biased stretch (low complexity) spans 100–117 (YYNQPYEPRPQQQPYDQG). The segment covering 135–150 (HQPSDAPSEPYQDQPQ) has biased composition (polar residues). 9 consecutive transmembrane segments (helical) span residues 444–464 (SAFG…YVAL), 543–563 (RWLN…LDFL), 573–593 (FAFF…WFAI), 619–639 (ILGV…FVLS), 654–674 (MCWF…FIAV), 700–720 (MLII…LIML), 729–749 (LVQY…YAFC), 828–848 (GVVL…LSSA), and 875–895 (IVLW…MWFL).

This sequence belongs to the chitin synthase family. Class I subfamily.

It localises to the cell membrane. It catalyses the reaction [(1-&gt;4)-N-acetyl-beta-D-glucosaminyl](n) + UDP-N-acetyl-alpha-D-glucosamine = [(1-&gt;4)-N-acetyl-beta-D-glucosaminyl](n+1) + UDP + H(+). Polymerizes chitin, a structural polymer of the cell wall and septum, by transferring the sugar moiety of UDP-GlcNAc to the non-reducing end of the growing chitin polymer. Plays an important role in nuclear sorting or distribution. In Fusarium oxysporum f. sp. lycopersici (strain 4287 / CBS 123668 / FGSC 9935 / NRRL 34936) (Fusarium vascular wilt of tomato), this protein is Chitin synthase 1.